The sequence spans 108 residues: Cyclin-dependent protein kinase inhibitor SMR13 (108 aa).

In terms of biological role, probable cyclin-dependent protein kinase (CDK) inhibitor that functions as a repressor of mitosis in the endoreduplication cell cycle. The protein is Cyclin-dependent protein kinase inhibitor SMR13 of Arabidopsis thaliana (Mouse-ear cress).